Consider the following 61-residue polypeptide: MAKTSMVAKQQKKQKFQVREYTRCERCGRPHSVYRKFKLCRICFRELAYKGQIPGVRKASW.

Residues C24, C27, C40, and C43 each contribute to the Zn(2+) site.

The protein belongs to the universal ribosomal protein uS14 family. Zinc-binding uS14 subfamily. As to quaternary structure, part of the 30S ribosomal subunit. Contacts proteins S3 and S10. The cofactor is Zn(2+).

Binds 16S rRNA, required for the assembly of 30S particles and may also be responsible for determining the conformation of the 16S rRNA at the A site. In Staphylococcus saprophyticus subsp. saprophyticus (strain ATCC 15305 / DSM 20229 / NCIMB 8711 / NCTC 7292 / S-41), this protein is Small ribosomal subunit protein uS14B.